The sequence spans 254 residues: Splicing factor tls1 (254 aa).

A compositionally biased stretch (basic and acidic residues) spans 69-83; the sequence is KEKQLNTANEPHEAN. Disordered stretches follow at residues 69–90 and 195–216; these read KEKQ…SAQS and RKRQ…LRTS. Residues 195 to 204 are compositionally biased toward basic residues; that stretch reads RKRQKKRARM. Basic and acidic residues predominate over residues 205–216; sequence KEKLDSKALRTS.

This sequence belongs to the TLS1 family. In terms of assembly, component of the spliceosome. Interacts with brr2.

Its subcellular location is the cytoplasm. It is found in the nucleus. Functionally, plays a role in pre-mRNA splicing by facilitating excision of introns featuring long spacing between the branchpoint and 3'-splice site. Assists the splicing of several components involved in chromatin organization, such as several shelterin complex subunits. This is Splicing factor tls1 from Schizosaccharomyces pombe (strain 972 / ATCC 24843) (Fission yeast).